The following is a 151-amino-acid chain: Nascent polypeptide-associated complex subunit beta (151 aa).

Positions 32–97 (EQDDTKLMEA…PQEKDVTQLI (66 aa)) constitute an NAC-A/B domain. A disordered region spans residues 122–151 (GKTPSMGGENAGADEDIPDLIEGQKFDEVE).

It belongs to the NAC-beta family. Part of the nascent polypeptide-associated complex (NAC), consisting of EGD2 and EGD1. NAC associates with ribosomes via EGD1.

It localises to the cytoplasm. It is found in the nucleus. Functionally, component of the nascent polypeptide-associated complex (NAC), a dynamic component of the ribosomal exit tunnel, protecting the emerging polypeptides from interaction with other cytoplasmic proteins to ensure appropriate nascent protein targeting. The NAC complex also promotes mitochondrial protein import by enhancing productive ribosome interactions with the outer mitochondrial membrane and blocks the inappropriate interaction of ribosomes translating non-secretory nascent polypeptides with translocation sites in the membrane of the endoplasmic reticulum. EGD1 may act as a transcription factor that exert a negative effect on the expression of several genes that are transcribed by RNA polymerase II. This chain is Nascent polypeptide-associated complex subunit beta (EGD1), found in Meyerozyma guilliermondii (strain ATCC 6260 / CBS 566 / DSM 6381 / JCM 1539 / NBRC 10279 / NRRL Y-324) (Yeast).